The chain runs to 152 residues: MTQSLQVKLLDPRFGDLWPLPAYATEASAGMDLRAALEAPMTLEPGDAALIPSGIAIHLDDPQVCAVILPRSGLGHRHGIVLGNGTGLIDADYQGPLLISTWNRGREAFTIEPGDRIAQLVILPIVRVSLQVVDTFVDSARGAGGFGHTGVR.

Residues 71-73 (RSG), Asn84, and 88-90 (LID) each bind substrate.

The protein belongs to the dUTPase family. It depends on Mg(2+) as a cofactor.

The enzyme catalyses dUTP + H2O = dUMP + diphosphate + H(+). Its pathway is pyrimidine metabolism; dUMP biosynthesis; dUMP from dCTP (dUTP route): step 2/2. Its function is as follows. This enzyme is involved in nucleotide metabolism: it produces dUMP, the immediate precursor of thymidine nucleotides and it decreases the intracellular concentration of dUTP so that uracil cannot be incorporated into DNA. In Xanthomonas campestris pv. campestris (strain 8004), this protein is Deoxyuridine 5'-triphosphate nucleotidohydrolase.